The chain runs to 260 residues: MGSQHSSALTFCQRKKDDNPEDLLADRDQEEAIAQFPYVEFTGRNSITCHTCQGAGYIPAEQVNELVALIPHSDQRLRPQRTKQYVLLSVLLCLLASGLVFFFLFPHSVLVDDNGIKVTKVTFNEQDSLVVLDVTATLKIRNSNFYPVAVTNLFSQVQYMKAVVGSYTTTNVSLIAPRSEHLVNFTVKAEVGGPSSYVYFYCTLPAIRVHNIVIFMRTSVKISYIGHISQSTLETQHYVDCGVNSTAAQSLFLVPRGPHL.

Gly-2 carries N-myristoyl glycine lipidation. Residues Tyr-85–Phe-105 form a helical membrane-spanning segment. Asn-184 carries N-linked (GlcNAc...) asparagine glycosylation. A helical transmembrane segment spans residues Ser-196 to Met-216.

It belongs to the TMEM106 family. In terms of assembly, interacts with TMEM106B.

It localises to the endoplasmic reticulum membrane. Its subcellular location is the membrane. This Mus musculus (Mouse) protein is Transmembrane protein 106C (Tmem106c).